Here is a 351-residue protein sequence, read N- to C-terminus: UDP-3-O-acylglucosamine N-acyltransferase (351 aa).

Catalysis depends on His240, which acts as the Proton acceptor.

It belongs to the transferase hexapeptide repeat family. LpxD subfamily. Homotrimer.

It carries out the reaction a UDP-3-O-[(3R)-3-hydroxyacyl]-alpha-D-glucosamine + a (3R)-hydroxyacyl-[ACP] = a UDP-2-N,3-O-bis[(3R)-3-hydroxyacyl]-alpha-D-glucosamine + holo-[ACP] + H(+). Its pathway is bacterial outer membrane biogenesis; LPS lipid A biosynthesis. Its function is as follows. Catalyzes the N-acylation of UDP-3-O-acylglucosamine using 3-hydroxyacyl-ACP as the acyl donor. Is involved in the biosynthesis of lipid A, a phosphorylated glycolipid that anchors the lipopolysaccharide to the outer membrane of the cell. The protein is UDP-3-O-acylglucosamine N-acyltransferase of Pseudomonas syringae pv. syringae (strain B728a).